The following is a 1062-amino-acid chain: Zinc finger protein swm (1062 aa).

The PWI domain maps to 7–75 (DKLKDWLSVV…ERLFDAIASE (69 aa)). Disordered regions lie at residues 119-145 (ADSP…QASQ) and 171-340 (KPAF…PDRV). A compositionally biased stretch (polar residues) spans 134–145 (DSNQVKLEQASQ). The segment covering 172 to 182 (PAFDHKTKDSH) has biased composition (basic and acidic residues). Over residues 197–207 (SASPPGRSSGV) the composition is skewed to low complexity. A compositionally biased stretch (gly residues) spans 208-220 (SGSGGGGPGGAGL). Over residues 234 to 249 (SRRRRASLRSRSRSRS) the composition is skewed to basic residues. 2 stretches are compositionally biased toward basic and acidic residues: residues 264 to 273 (RRVNEREKTQ) and 294 to 310 (RNFD…DRPR). Positions 322 to 340 (RSMSPERNARRNQNSPDRV) are enriched in polar residues. The segment at 363–391 (SHPRQRCRDFDEKGYCVRGETCPWDHGVN) adopts a C3H1-type zinc-finger fold. Residues 416–463 (EIWARSGGPPPGAGQGPVPPPTQPGQTTINPFSGNVRPTTLMSGSGPS) form a disordered region. Over residues 423–438 (GPPPGAGQGPVPPPTQ) the composition is skewed to pro residues. A compositionally biased stretch (polar residues) spans 444-461 (INPFSGNVRPTTLMSGSG). In terms of domain architecture, RRM spans 561–635 (SSLELRKVPR…RFIKVFWHND (75 aa)). Disordered regions lie at residues 666 to 704 (NVPA…QANT), 716 to 741 (TTTA…LNPA), 822 to 847 (QDQL…KEQQ), 886 to 920 (SAAN…PTRV), and 1004 to 1062 (APVE…SWRR). Residues 721-733 (GSAGGAAGAGAPG) show a composition bias toward gly residues. Residues 823-840 (DQLQAQMQQQQQQQQPPV) are compositionally biased toward low complexity. The span at 1018 to 1037 (SLENPKQLIQSVSESESLLG) shows a compositional bias: polar residues. A compositionally biased stretch (acidic residues) spans 1046 to 1056 (LEDEEEDEESE).

It is found in the nucleus. In terms of biological role, negatively regulates Hedgehog (hh) protein signal in wing development. Regulates neural-specific glycosylation by binding to FucTA mRNA and facilitating its nuclear export in neural cells. This chain is Zinc finger protein swm, found in Drosophila melanogaster (Fruit fly).